The chain runs to 187 residues: Large ribosomal subunit protein eL18B (187 aa).

The residue at position 134 (Thr134) is a Phosphothreonine. Ser136 carries the phosphoserine modification.

Belongs to the eukaryotic ribosomal protein eL18 family. Component of the large ribosomal subunit (LSU). Mature yeast ribosomes consist of a small (40S) and a large (60S) subunit. The 40S small subunit contains 1 molecule of ribosomal RNA (18S rRNA) and at least 33 different proteins. The large 60S subunit contains 3 rRNA molecules (25S, 5.8S and 5S rRNA) and at least 46 different proteins. eL18 interacts with NAP1.

The protein localises to the cytoplasm. Component of the ribosome, a large ribonucleoprotein complex responsible for the synthesis of proteins in the cell. The small ribosomal subunit (SSU) binds messenger RNAs (mRNAs) and translates the encoded message by selecting cognate aminoacyl-transfer RNA (tRNA) molecules. The large subunit (LSU) contains the ribosomal catalytic site termed the peptidyl transferase center (PTC), which catalyzes the formation of peptide bonds, thereby polymerizing the amino acids delivered by tRNAs into a polypeptide chain. The nascent polypeptides leave the ribosome through a tunnel in the LSU and interact with protein factors that function in enzymatic processing, targeting, and the membrane insertion of nascent chains at the exit of the ribosomal tunnel. This Schizosaccharomyces pombe (strain 972 / ATCC 24843) (Fission yeast) protein is Large ribosomal subunit protein eL18B (rpl1802).